The chain runs to 84 residues: Putative defensin-like protein 101 (84 aa).

An N-terminal signal peptide occupies residues 1–27 (MDITKNIVTLLLVVLFPILFYYNNVLA). 4 cysteine pairs are disulfide-bonded: Cys-39-Cys-81, Cys-43-Cys-67, Cys-52-Cys-79, and Cys-56-Cys-80.

This sequence belongs to the DEFL family.

It is found in the secreted. In Arabidopsis thaliana (Mouse-ear cress), this protein is Putative defensin-like protein 101.